Consider the following 796-residue polypeptide: Putative aconitate hydratase, mitochondrial (796 aa).

The transit peptide at methionine 1–leucine 28 directs the protein to the mitochondrion. Residues glutamine 108 and aspartate 201–histidine 203 each bind substrate. Residues cysteine 399, cysteine 462, and cysteine 465 each coordinate [4Fe-4S] cluster. Substrate-binding residues include arginine 489 and arginine 494. A disordered region spans residues glutamate 540–serine 569. Alanine 685–arginine 686 contacts substrate.

The protein belongs to the aconitase/IPM isomerase family.

It localises to the mitochondrion. In terms of biological role, has no detectable activity towards cis-acontiate or cis-homoaconitate. This is Putative aconitate hydratase, mitochondrial (acoB) from Emericella nidulans (strain FGSC A4 / ATCC 38163 / CBS 112.46 / NRRL 194 / M139) (Aspergillus nidulans).